The sequence spans 151 residues: Protein PLANT CADMIUM RESISTANCE 1 (151 aa).

A run of 2 helical transmembrane segments spans residues 31 to 47 (ITLC…AEIV) and 54 to 71 (CCAA…TSCG).

It belongs to the cornifelin family. In terms of assembly, homopentamer. Expressed in aerial part, but not in roots. Detected in the guard and mesophyll cells.

It localises to the cell membrane. Its function is as follows. Involved in glutathione-independent cadmium resistance. Reduces cadmium uptake rather than activating efflux, but is not closely coupled to calcium transporter. This is Protein PLANT CADMIUM RESISTANCE 1 (PCR1) from Arabidopsis thaliana (Mouse-ear cress).